The following is an 808-amino-acid chain: Na(+)/H(+) antiporter 2 (808 aa).

A run of 9 helical transmembrane segments spans residues H12–V32, L36–L56, I70–L90, L105–V125, L128–A148, C174–G194, W203–G223, F244–V264, and L267–T287. N291 is a glycosylation site (N-linked (GlcNAc...) asparagine). The next 5 membrane-spanning stretches (helical) occupy residues N294–W314, N319–L339, A361–S381, V409–G429, and V432–G452. Disordered regions lie at residues Q478–V499 and H541–A562. Residues A542–R561 show a composition bias toward polar residues. N-linked (GlcNAc...) asparagine glycans are attached at residues N545 and N602. Residues L774–D808 are disordered. Positions E779 to D797 are enriched in acidic residues.

Belongs to the fungal Na(+)/H(+) exchanger family.

It is found in the membrane. Functionally, sodium export from cell, takes up external protons in exchange for internal sodium ions. Seems to be poorly expressed. The sequence is that of Na(+)/H(+) antiporter 2 (SOD22) from Zygosaccharomyces rouxii.